Reading from the N-terminus, the 271-residue chain is uncharacterized protein (271 aa).

The protein belongs to the HAD-like hydrolase superfamily.

This is an uncharacterized protein from Staphylococcus aureus (strain MRSA252).